The sequence spans 215 residues: Riboflavin synthase (215 aa).

Lumazine-binding repeat units lie at residues 1–96 (MFTG…FGGH) and 97–193 (FVSG…YRFL). 2,4-dihydroxypteridine-binding positions include 4–6 (GIV), 47–49 (CLT), 61–66 (DVMPET), 100–102 (GHV), K135, 144–146 (SST), and 158–163 (SVIPHT).

Homotrimer.

It carries out the reaction 2 6,7-dimethyl-8-(1-D-ribityl)lumazine + H(+) = 5-amino-6-(D-ribitylamino)uracil + riboflavin. Its pathway is cofactor biosynthesis; riboflavin biosynthesis; riboflavin from 2-hydroxy-3-oxobutyl phosphate and 5-amino-6-(D-ribitylamino)uracil: step 2/2. Its function is as follows. Catalyzes the dismutation of two molecules of 6,7-dimethyl-8-ribityllumazine, resulting in the formation of riboflavin and 5-amino-6-(D-ribitylamino)uracil. This Bacillus amyloliquefaciens (Bacillus velezensis) protein is Riboflavin synthase (ribE).